The chain runs to 258 residues: 2-succinyl-6-hydroxy-2,4-cyclohexadiene-1-carboxylate synthase (258 aa).

Belongs to the AB hydrolase superfamily. MenH family. In terms of assembly, monomer.

It catalyses the reaction 5-enolpyruvoyl-6-hydroxy-2-succinyl-cyclohex-3-ene-1-carboxylate = (1R,6R)-6-hydroxy-2-succinyl-cyclohexa-2,4-diene-1-carboxylate + pyruvate. It functions in the pathway quinol/quinone metabolism; 1,4-dihydroxy-2-naphthoate biosynthesis; 1,4-dihydroxy-2-naphthoate from chorismate: step 3/7. Its pathway is quinol/quinone metabolism; menaquinone biosynthesis. Functionally, catalyzes a proton abstraction reaction that results in 2,5-elimination of pyruvate from 2-succinyl-5-enolpyruvyl-6-hydroxy-3-cyclohexene-1-carboxylate (SEPHCHC) and the formation of 2-succinyl-6-hydroxy-2,4-cyclohexadiene-1-carboxylate (SHCHC). This chain is 2-succinyl-6-hydroxy-2,4-cyclohexadiene-1-carboxylate synthase, found in Enterobacter sp. (strain 638).